We begin with the raw amino-acid sequence, 257 residues long: uncharacterized protein (257 aa).

This is an uncharacterized protein from Bacillus subtilis (strain 168).